The primary structure comprises 423 residues: Serine hydroxymethyltransferase (423 aa).

(6S)-5,6,7,8-tetrahydrofolate contacts are provided by residues Leu-126 and 130 to 132; that span reads GHL. Lys-235 is modified (N6-(pyridoxal phosphate)lysine).

The protein belongs to the SHMT family. Homodimer. The cofactor is pyridoxal 5'-phosphate.

It localises to the cytoplasm. It carries out the reaction (6R)-5,10-methylene-5,6,7,8-tetrahydrofolate + glycine + H2O = (6S)-5,6,7,8-tetrahydrofolate + L-serine. It participates in one-carbon metabolism; tetrahydrofolate interconversion. The protein operates within amino-acid biosynthesis; glycine biosynthesis; glycine from L-serine: step 1/1. Its function is as follows. Catalyzes the reversible interconversion of serine and glycine with tetrahydrofolate (THF) serving as the one-carbon carrier. This reaction serves as the major source of one-carbon groups required for the biosynthesis of purines, thymidylate, methionine, and other important biomolecules. Also exhibits THF-independent aldolase activity toward beta-hydroxyamino acids, producing glycine and aldehydes, via a retro-aldol mechanism. This Sorangium cellulosum (strain So ce56) (Polyangium cellulosum (strain So ce56)) protein is Serine hydroxymethyltransferase.